We begin with the raw amino-acid sequence, 267 residues long: Ras-related protein Rab-36 (267 aa).

Valine 68, glycine 69, lysine 70, threonine 71, serine 72, aspartate 83, tyrosine 86, and threonine 89 together coordinate GTP. Mg(2+) is bound at residue threonine 71. Positions 76-94 (RFCKNVFDRDYKATIGVDF) match the Switch 1 motif. Mg(2+)-binding residues include threonine 89 and aspartate 112. The Switch 2 motif lies at 113–132 (TAGQEKFKCIASAYYRGAQV). Residues glycine 115, lysine 172, aspartate 174, serine 203, alanine 204, and lysine 205 each contribute to the GTP site. Residues 243-267 (GDLIQMEGSPPETQESKRPSSLGCC) form a disordered region. 2 S-geranylgeranyl cysteine lipidation sites follow: cysteine 266 and cysteine 267.

It belongs to the small GTPase superfamily. Rab family. Mg(2+) serves as cofactor. Ubiquitously present in all tissues examined.

Its subcellular location is the golgi apparatus membrane. It carries out the reaction GTP + H2O = GDP + phosphate + H(+). Its activity is regulated as follows. Regulated by guanine nucleotide exchange factors (GEFs) which promote the exchange of bound GDP for free GTP. Regulated by GTPase activating proteins (GAPs) which increase the GTP hydrolysis activity. Inhibited by GDP dissociation inhibitors (GDIs). The small GTPases Rab are key regulators of intracellular membrane trafficking, from the formation of transport vesicles to their fusion with membranes. Rabs cycle between an inactive GDP-bound form and an active GTP-bound form that is able to recruit to membranes different sets of downstream effectors directly responsible for vesicle formation, movement, tethering and fusion. In Homo sapiens (Human), this protein is Ras-related protein Rab-36.